The following is a 25-amino-acid chain: Chrysophsin-1 (25 aa).

The residue at position 25 (His25) is a Histidine amide.

In terms of tissue distribution, gill. Localized in certain epithelial cells lining the surface of secondary lamellae and eosinophilic granule cell-like cells at the base of secondary lamellae.

The protein resides in the secreted. In terms of biological role, has antibacterial activity against Gram-positive bacteria B.subtilis ATCC 6633, L.garvieae ATCC 49156 and S.iniae F-8502, and Gram-negative bacteria E.coli WT-2, V.anguillarum ATCC 19264, V.penaeicida KHA, V.harveyi ATCC 14126, V.vulnificus ATCC 33148, A.salmonicida NCMB 1102 and P.putida ATCC 12633. Has hemolytic activity against human red blood cells. Seems to disrupt the membranes by adopting an alpha helical conformation. May play a significant role in innate host defense. This is Chrysophsin-1 from Pagrus major (Red sea bream).